Consider the following 478-residue polypeptide: Membrane-bound lytic murein transglycosylase F (478 aa).

The signal sequence occupies residues 1-22 (MTRFLFAIILGFLLTACQQVTV). Residues 23 to 257 (EETEYVPHKL…HLNEKYFGHV (235 aa)) are non-LT domain. The interval 258–478 (KRFDYIDTRA…PGTLSPDKPK (221 aa)) is LT domain. Residue glutamate 302 is part of the active site. Positions 446 to 478 (SKQQNSDEEEPSDLASEDGPAPVPGTLSPDKPK) are disordered. The segment covering 451 to 461 (SDEEEPSDLAS) has biased composition (acidic residues).

In the N-terminal section; belongs to the bacterial solute-binding protein 3 family. It in the C-terminal section; belongs to the transglycosylase Slt family.

The protein localises to the cell outer membrane. It catalyses the reaction Exolytic cleavage of the (1-&gt;4)-beta-glycosidic linkage between N-acetylmuramic acid (MurNAc) and N-acetylglucosamine (GlcNAc) residues in peptidoglycan, from either the reducing or the non-reducing ends of the peptidoglycan chains, with concomitant formation of a 1,6-anhydrobond in the MurNAc residue.. Murein-degrading enzyme that degrades murein glycan strands and insoluble, high-molecular weight murein sacculi, with the concomitant formation of a 1,6-anhydromuramoyl product. Lytic transglycosylases (LTs) play an integral role in the metabolism of the peptidoglycan (PG) sacculus. Their lytic action creates space within the PG sacculus to allow for its expansion as well as for the insertion of various structures such as secretion systems and flagella. The polypeptide is Membrane-bound lytic murein transglycosylase F (Shewanella sp. (strain MR-4)).